Consider the following 79-residue polypeptide: Orally active insecticidal peptide (79 aa).

An N-terminal signal peptide occupies residues 1–19 (MRVLFIIAGLALLSVVCYT). Positions 20-44 (SEMKERSSFNEVLSEFFAADEPQER) are excised as a propeptide. 3 disulfides stabilise this stretch: Cys46–Cys61, Cys53–Cys66, and Cys60–Cys73. Ala77 is modified (alanine amide).

Belongs to the neurotoxin 03 (Tx2) family. 01 subfamily. As to expression, expressed by the venom gland.

Its subcellular location is the secreted. In terms of biological role, probable ion channel inhibitor. Shows insecticidal activity when injected into mealworms. The chain is Orally active insecticidal peptide from Selenotypus plumipes (Australian featherleg tarantula).